Here is a 246-residue protein sequence, read N- to C-terminus: Probable cytokinin riboside 5'-monophosphate phosphoribohydrolase LOGL5 (246 aa).

Positions 1 to 10 (MMMENSREQQ) are enriched in basic and acidic residues. The interval 1–28 (MMMENSREQQPESSPANNNSKKKKKKKT) is disordered. Residues Glu103, 121 to 122 (RK), 138 to 144 (GYGTLEE), and Thr150 contribute to the substrate site.

It belongs to the LOG family. As to expression, expressed in roots and leaves.

It carries out the reaction N(6)-(dimethylallyl)adenosine 5'-phosphate + H2O = N(6)-dimethylallyladenine + D-ribose 5-phosphate. The enzyme catalyses 9-ribosyl-trans-zeatin 5'-phosphate + H2O = trans-zeatin + D-ribose 5-phosphate. Cytokinin-activating enzyme working in the direct activation pathway. Phosphoribohydrolase that converts inactive cytokinin nucleotides to the biologically active free-base forms. The chain is Probable cytokinin riboside 5'-monophosphate phosphoribohydrolase LOGL5 (LOGL5) from Oryza sativa subsp. japonica (Rice).